The sequence spans 163 residues: MEQKEPMTQYGYEKIQKEFEALKEERPKVVEEIERAKEHGDLRENAEYHAAKERLAFIDARLTELSDLLARAQVIDPSKLPHDKVGFGSTVKLLDIEEEEEIEYTIVGSTESNPEHGLISYNTPLARQLIGKEEGDEITVKLPKGEIDFEVLEVYYKPIKFEE.

A coiled-coil region spans residues 12–73 (YEKIQKEFEA…ELSDLLARAQ (62 aa)).

The protein belongs to the GreA/GreB family.

Functionally, necessary for efficient RNA polymerase transcription elongation past template-encoded arresting sites. The arresting sites in DNA have the property of trapping a certain fraction of elongating RNA polymerases that pass through, resulting in locked ternary complexes. Cleavage of the nascent transcript by cleavage factors such as GreA or GreB allows the resumption of elongation from the new 3'terminus. GreA releases sequences of 2 to 3 nucleotides. The chain is Transcription elongation factor GreA from Nitratiruptor sp. (strain SB155-2).